The sequence spans 272 residues: NH(3)-dependent NAD(+) synthetase (272 aa).

G45–S52 is an ATP binding site. A Mg(2+)-binding site is contributed by D51. R138 contributes to the deamido-NAD(+) binding site. T158 serves as a coordination point for ATP. E163 serves as a coordination point for Mg(2+). Positions 171 and 178 each coordinate deamido-NAD(+). Residues K187 and T209 each coordinate ATP. Residue H258–K259 participates in deamido-NAD(+) binding.

Belongs to the NAD synthetase family. Homodimer.

The enzyme catalyses deamido-NAD(+) + NH4(+) + ATP = AMP + diphosphate + NAD(+) + H(+). It functions in the pathway cofactor biosynthesis; NAD(+) biosynthesis; NAD(+) from deamido-NAD(+) (ammonia route): step 1/1. Catalyzes the ATP-dependent amidation of deamido-NAD to form NAD. Uses ammonia as a nitrogen source. The chain is NH(3)-dependent NAD(+) synthetase from Bacillus cereus (strain ATCC 10987 / NRS 248).